Here is a 659-residue protein sequence, read N- to C-terminus: Siderophore transporter fer7 (659 aa).

Residues methionine 1–glutamine 62 form a disordered region. Residues glutamine 31–leucine 41 show a composition bias toward polar residues. N-linked (GlcNAc...) asparagine glycosylation occurs at asparagine 38. Residues asparagine 42–aspartate 54 are compositionally biased toward basic and acidic residues. 8 helical membrane passes run asparagine 79–leucine 99, leucine 121–alanine 141, glutamine 150–alanine 170, glycine 208–isoleucine 228, glycine 245–valine 265, leucine 316–tyrosine 336, isoleucine 348–leucine 368, and valine 379–glycine 399. Asparagine 415 carries an N-linked (GlcNAc...) asparagine glycan. 2 consecutive transmembrane segments (helical) span residues valine 424–leucine 444 and lysine 451–glycine 471. The N-linked (GlcNAc...) asparagine glycan is linked to asparagine 475. 3 helical membrane passes run threonine 478–glycine 498, alanine 528–alanine 548, and proline 590–proline 610.

It belongs to the major facilitator superfamily.

Its subcellular location is the membrane. In terms of biological role, siderophore transporter; part of the gene cluster that mediates the biosynthesis of siderophore ferrichrome A which is contributing to organismal virulence. The chain is Siderophore transporter fer7 from Mycosarcoma maydis (Corn smut fungus).